The chain runs to 180 residues: Adenine phosphoribosyltransferase (180 aa).

The protein belongs to the purine/pyrimidine phosphoribosyltransferase family. Homodimer.

It is found in the cytoplasm. The catalysed reaction is AMP + diphosphate = 5-phospho-alpha-D-ribose 1-diphosphate + adenine. The protein operates within purine metabolism; AMP biosynthesis via salvage pathway; AMP from adenine: step 1/1. In terms of biological role, catalyzes a salvage reaction resulting in the formation of AMP, that is energically less costly than de novo synthesis. This chain is Adenine phosphoribosyltransferase, found in Actinobacillus succinogenes (strain ATCC 55618 / DSM 22257 / CCUG 43843 / 130Z).